The sequence spans 88 residues: Three-finger toxin 3FTx-2 (88 aa).

Residues 1–21 form the signal peptide; sequence MKTLLLTLVVVTIVCLDLGNT. 4 cysteine pairs are disulfide-bonded: cysteine 27–cysteine 48, cysteine 41–cysteine 66, cysteine 70–cysteine 81, and cysteine 82–cysteine 87.

The protein belongs to the three-finger toxin family. Ancestral subfamily. Orphan group II sub-subfamily. As to expression, expressed by the venom gland.

Its subcellular location is the secreted. Binds with low affinity to muscular (alpha-1-beta-1-delta-epsilon/CHRNA1-CHRNB1-CHRND-CHRNE) and very low affinity to neuronal (alpha-7/CHRNA7) nicotinic acetylcholine receptor (nAChR). The protein is Three-finger toxin 3FTx-2 of Micrurus corallinus (Brazilian coral snake).